The sequence spans 1075 residues: Atos homolog protein A (1075 aa).

The transactivation domain 1 (TAD1) stretch occupies residues 24-32 (ALLITEGRT). 3 disordered regions span residues 430–469 (FGSPEFGSPGDSREGKVREKSETRPGETCTSHSLYPRQPA), 570–592 (YSPQEKPLKPEVRTQHQNHPDSI), and 703–766 (LNKN…PHSV). A compositionally biased stretch (basic and acidic residues) spans 440–454 (DSREGKVREKSETRP). Over residues 703–712 (LNKNKTNCSS) the composition is skewed to polar residues. Residues 746–759 (DRLKTEQEAKRDSG) are compositionally biased toward basic and acidic residues. Residues 878-935 (LLGNFEESVLNYRLDPLGIVDGFTAEVGASGTFCPTHLTLPVEVSFYSVSDDNAPSPY) are required for macropage invasion. The tract at residues 962–970 (FNPNKTVVK) is transactivation domain 2 (TAD2).

This sequence belongs to the ATOS family.

The protein resides in the nucleus. Its function is as follows. Transcription regulator that syncronizes transcriptional and translational programs to promote macrophage invasion of tissues. The sequence is that of Atos homolog protein A (Atosa) from Mus musculus (Mouse).